We begin with the raw amino-acid sequence, 447 residues long: DNA primase DnaG (447 aa).

The 75-residue stretch at 200 to 274 (DSIIVVEGRA…DIDYVARAPE (75 aa)) folds into the Toprim domain. 3 residues coordinate Mg(2+): E206, D248, and D250.

Belongs to the archaeal DnaG primase family. In terms of assembly, forms a ternary complex with MCM helicase and DNA. Component of the archaeal exosome complex. Mg(2+) serves as cofactor.

The enzyme catalyses ssDNA + n NTP = ssDNA/pppN(pN)n-1 hybrid + (n-1) diphosphate.. RNA polymerase that catalyzes the synthesis of short RNA molecules used as primers for DNA polymerase during DNA replication. Also part of the exosome, which is a complex involved in RNA degradation. Acts as a poly(A)-binding protein that enhances the interaction between heteromeric, adenine-rich transcripts and the exosome. In Pyrococcus abyssi (strain GE5 / Orsay), this protein is DNA primase DnaG.